The primary structure comprises 61 residues: Small ribosomal subunit protein uS14 (61 aa).

Zn(2+)-binding residues include Cys24, Cys27, Cys40, and Cys43.

Belongs to the universal ribosomal protein uS14 family. Zinc-binding uS14 subfamily. Part of the 30S ribosomal subunit. Contacts proteins S3 and S10. It depends on Zn(2+) as a cofactor.

In terms of biological role, binds 16S rRNA, required for the assembly of 30S particles and may also be responsible for determining the conformation of the 16S rRNA at the A site. The protein is Small ribosomal subunit protein uS14 of Bifidobacterium adolescentis (strain ATCC 15703 / DSM 20083 / NCTC 11814 / E194a).